A 110-amino-acid chain; its full sequence is Insulin (110 aa).

Residues 1–23 (MALWLQAFTLLVLLVLSSPGAQS) form the signal peptide. Disulfide bonds link Cys30-Cys96, Cys42-Cys109, and Cys95-Cys100. A propeptide spans 56–87 (DVDPLLGFLSPKSAQENEADEYPYKDQGDLKV) (c peptide).

Belongs to the insulin family. In terms of assembly, heterodimer of a B chain and an A chain linked by two disulfide bonds.

The protein resides in the secreted. Insulin decreases blood glucose concentration. It increases cell permeability to monosaccharides, amino acids and fatty acids. It accelerates glycolysis, the pentose phosphate cycle, and glycogen synthesis in liver. This Pantodon buchholzi (Freshwater butterflyfish) protein is Insulin (ins).